The chain runs to 363 residues: tRNA(Met) cytidine acetate ligase (363 aa).

ATP contacts are provided by residues 7-20, Gly-96, Asn-152, and Arg-175; that span reads IAEF…HKYL.

It belongs to the TmcAL family.

It localises to the cytoplasm. The catalysed reaction is cytidine(34) in elongator tRNA(Met) + acetate + ATP = N(4)-acetylcytidine(34) in elongator tRNA(Met) + AMP + diphosphate. In terms of biological role, catalyzes the formation of N(4)-acetylcytidine (ac(4)C) at the wobble position of elongator tRNA(Met), using acetate and ATP as substrates. First activates an acetate ion to form acetyladenylate (Ac-AMP) and then transfers the acetyl group to tRNA to form ac(4)C34. In Streptococcus gordonii (strain Challis / ATCC 35105 / BCRC 15272 / CH1 / DL1 / V288), this protein is tRNA(Met) cytidine acetate ligase.